Consider the following 441-residue polypeptide: tRNA(Ile)-lysidine synthase (441 aa).

An ATP-binding site is contributed by 27-32; it reads SGGVDS.

This sequence belongs to the tRNA(Ile)-lysidine synthase family.

It localises to the cytoplasm. It carries out the reaction cytidine(34) in tRNA(Ile2) + L-lysine + ATP = lysidine(34) in tRNA(Ile2) + AMP + diphosphate + H(+). In terms of biological role, ligates lysine onto the cytidine present at position 34 of the AUA codon-specific tRNA(Ile) that contains the anticodon CAU, in an ATP-dependent manner. Cytidine is converted to lysidine, thus changing the amino acid specificity of the tRNA from methionine to isoleucine. This Proteus mirabilis (strain HI4320) protein is tRNA(Ile)-lysidine synthase.